Consider the following 297-residue polypeptide: MEHLGAHHLHQGQAEPISFGIDQILNTSEPGSCMVSHPRLQDSADYGLGCIVGSAYNTVTGGYGASGGGAGAYGGTSCSMGALPGSYNVNMAVSMNGNALSSAGGVIRVPAHRPVAGGVHQPLSAAVPPVNGMNSLTGLTFPWMESNRRYTKDRFTGHPYQNRTPPKKKKPRTSFTRLQICELEKRFHRQKYLASAERAALAKALKMTDAQVKTWFQNRRTKWRRQTAEEREAERQQANRILMQLQQEAFQKTINQPIQADPICVHNSSLFALQNLQPWSDDSTKITSVTTVASACE.

Residues 153 to 174 (DRFTGHPYQNRTPPKKKKPRTS) form a disordered region. Positions 168–227 (KKKPRTSFTRLQICELEKRFHRQKYLASAERAALAKALKMTDAQVKTWFQNRRTKWRRQT) form a DNA-binding region, homeobox.

The protein localises to the nucleus. Seems to be involved in the development of cranial sensory innervation from peripheral ganglia. The sequence is that of T-cell leukemia homeobox protein 1 (TLX1) from Gallus gallus (Chicken).